The primary structure comprises 162 residues: Crossover junction endodeoxyribonuclease RuvC (162 aa).

Catalysis depends on residues D8, E69, and H141. Residues D8, E69, and H141 each coordinate Mg(2+).

The protein belongs to the RuvC family. As to quaternary structure, homodimer which binds Holliday junction (HJ) DNA. The HJ becomes 2-fold symmetrical on binding to RuvC with unstacked arms; it has a different conformation from HJ DNA in complex with RuvA. In the full resolvosome a probable DNA-RuvA(4)-RuvB(12)-RuvC(2) complex forms which resolves the HJ. The cofactor is Mg(2+).

Its subcellular location is the cytoplasm. It catalyses the reaction Endonucleolytic cleavage at a junction such as a reciprocal single-stranded crossover between two homologous DNA duplexes (Holliday junction).. In terms of biological role, the RuvA-RuvB-RuvC complex processes Holliday junction (HJ) DNA during genetic recombination and DNA repair. Endonuclease that resolves HJ intermediates. Cleaves cruciform DNA by making single-stranded nicks across the HJ at symmetrical positions within the homologous arms, yielding a 5'-phosphate and a 3'-hydroxyl group; requires a central core of homology in the junction. The consensus cleavage sequence is 5'-(A/T)TT(C/G)-3'. Cleavage occurs on the 3'-side of the TT dinucleotide at the point of strand exchange. HJ branch migration catalyzed by RuvA-RuvB allows RuvC to scan DNA until it finds its consensus sequence, where it cleaves and resolves the cruciform DNA. The polypeptide is Crossover junction endodeoxyribonuclease RuvC (Wolbachia sp. subsp. Brugia malayi (strain TRS)).